We begin with the raw amino-acid sequence, 111 residues long: UPF0145 protein Bphy_3680 (111 aa).

It belongs to the UPF0145 family.

This Paraburkholderia phymatum (strain DSM 17167 / CIP 108236 / LMG 21445 / STM815) (Burkholderia phymatum) protein is UPF0145 protein Bphy_3680.